The sequence spans 385 residues: NADH-quinone oxidoreductase subunit D 2 (385 aa).

The protein belongs to the complex I 49 kDa subunit family. In terms of assembly, NDH-1 is composed of 14 different subunits. Subunits NuoB, C, D, E, F, and G constitute the peripheral sector of the complex.

It localises to the cell membrane. It carries out the reaction a quinone + NADH + 5 H(+)(in) = a quinol + NAD(+) + 4 H(+)(out). Its function is as follows. NDH-1 shuttles electrons from NADH, via FMN and iron-sulfur (Fe-S) centers, to quinones in the respiratory chain. The immediate electron acceptor for the enzyme in this species is believed to be a menaquinone. Couples the redox reaction to proton translocation (for every two electrons transferred, four hydrogen ions are translocated across the cytoplasmic membrane), and thus conserves the redox energy in a proton gradient. This chain is NADH-quinone oxidoreductase subunit D 2, found in Salinispora arenicola (strain CNS-205).